Consider the following 878-residue polypeptide: Phosphoenolpyruvate carboxylase (878 aa).

Active-site residues include histidine 138 and lysine 544.

This sequence belongs to the PEPCase type 1 family. The cofactor is Mg(2+).

It catalyses the reaction oxaloacetate + phosphate = phosphoenolpyruvate + hydrogencarbonate. Its function is as follows. Forms oxaloacetate, a four-carbon dicarboxylic acid source for the tricarboxylic acid cycle. The sequence is that of Phosphoenolpyruvate carboxylase from Psychromonas ingrahamii (strain DSM 17664 / CCUG 51855 / 37).